We begin with the raw amino-acid sequence, 274 residues long: Bis(5'-nucleosyl)-tetraphosphatase, symmetrical (274 aa).

Belongs to the Ap4A hydrolase family.

The enzyme catalyses P(1),P(4)-bis(5'-adenosyl) tetraphosphate + H2O = 2 ADP + 2 H(+). Hydrolyzes diadenosine 5',5'''-P1,P4-tetraphosphate to yield ADP. The protein is Bis(5'-nucleosyl)-tetraphosphatase, symmetrical of Janthinobacterium sp. (strain Marseille) (Minibacterium massiliensis).